The sequence spans 278 residues: Large ribosomal subunit protein uL2 (278 aa).

2 disordered regions span residues 1-20 and 225-278; these read MGIR…SVSD and VMNP…GKKR. The segment covering 258 to 278 has biased composition (basic residues); sequence RNKKKASSRLIVRRRKSGKKR.

The protein belongs to the universal ribosomal protein uL2 family. Part of the 50S ribosomal subunit. Forms a bridge to the 30S subunit in the 70S ribosome.

In terms of biological role, one of the primary rRNA binding proteins. Required for association of the 30S and 50S subunits to form the 70S ribosome, for tRNA binding and peptide bond formation. It has been suggested to have peptidyltransferase activity; this is somewhat controversial. Makes several contacts with the 16S rRNA in the 70S ribosome. This Cutibacterium acnes (strain DSM 16379 / KPA171202) (Propionibacterium acnes) protein is Large ribosomal subunit protein uL2.